We begin with the raw amino-acid sequence, 795 residues long: MKKLGRIHPNRQVLAFILMVFLSQVRLEPIRYSVLEETESGSFVAHLAKDLGLGIGELASRSARVLSDDDKQRLQLDRQTGDLLLREKLDREELCGPIEPCVLHFQVFLEMPVQFFQGELLIQDINDHSPIFPEREVLLKILENSQPGTLFPLLIAEDLDVGSNGLQKYTISPNSHFHILTRNHSEGKKYPDLVQDKPLDREEQPEFSLTLVALDGGSPPRSGTVMVRILIMDINDNAPEFVHTPYGVQVLENSPLDSPIVRVLARDIDAGNFGSVSYGLFQASDEIKQTFSINEVTGEILLKKKLDFEKIKSYHVEIEATDGGGLSGKGTVVIEVVDVNDNPPELIISSLTSSIPENAPETVVSIFRIRDRDSGENGKMICSIPDNLPFILKPTLKNFYTLVTERPLDRETSAEYNITIAVTDLGTPRLKTQQNITVQVSDVNDNAPAFTQTSYTLFVRENNSPALHIGSVSATDRDSGTNAQVTYSLLPPQDPHLPLASLVSINADNGHLFALRSLDYEALQAFEFRVGASDRGSPALSSEALVRVLVLDTNDNSPFVLYPLQNGSAPCTELVPRAAEPGYLVTKVVAVDGDSGQNAWLSYQLLKATEPGLFGVWAHNGEVRTARLLSERDAAKHRLVVLVKDNGEPPRSATATLHVLLVDGFSQPYLPLPEAAPAQAQADSLTVYLVVALASVSSLFLFSVLLFVAVRLCRRSRAASVGRCSVPEGPFPGHLVDVSGTGTLSQSYQYEVCLTGDSGTGEFKFLKPIFPNLLVQDTGREVKENPKFRNSLVFS.

A signal peptide spans 1-27; it reads MKKLGRIHPNRQVLAFILMVFLSQVRL. At 28-689 the chain is on the extracellular side; it reads EPIRYSVLEE…AQADSLTVYL (662 aa). Cadherin domains lie at 34–132, 137–241, 246–346, 351–450, and 455–560; these read VLEE…SPIF, VLLK…APEF, YGVQ…PPEL, LTSS…APAF, and YTLF…SPFV. Asn-183 carries an N-linked (GlcNAc...) asparagine glycan. 2 N-linked (GlcNAc...) asparagine glycosylation sites follow: Asn-417 and Asn-435. The N-linked (GlcNAc...) asparagine glycan is linked to Asn-566. Positions 567–670 constitute a Cadherin 6 domain; sequence GSAPCTELVP…LVDGFSQPYL (104 aa). Residues 690-710 traverse the membrane as a helical segment; sequence VVALASVSSLFLFSVLLFVAV. Over 711 to 795 the chain is Cytoplasmic; sequence RLCRRSRAAS…PKFRNSLVFS (85 aa).

It localises to the cell membrane. Functionally, potential calcium-dependent cell-adhesion protein. May be involved in the establishment and maintenance of specific neuronal connections in the brain. This is Protocadherin beta-4 (PCDHB4) from Homo sapiens (Human).